The primary structure comprises 72 residues: Large ribosomal subunit protein uL29 (72 aa).

The protein belongs to the universal ribosomal protein uL29 family.

The polypeptide is Large ribosomal subunit protein uL29 (rpmC) (Treponema pallidum (strain Nichols)).